The following is a 166-amino-acid chain: Cyclin-dependent kinase 4 inhibitor D (166 aa).

M1 is subject to N-acetylmethionine. ANK repeat units lie at residues 41–69 (FGKTALQVMMFGSPAVALELLKQGASPNV), 73–102 (SGTSPVHDAARTGFLDTLKVLVEHGADVNA), 106–135 (TGSLPIHLAIREGHSSVVSFLAPESDLHHR), and 138–165 (SGLTPLELARQRGAQNLMDILQGHMMIP).

Belongs to the CDKN2 cyclin-dependent kinase inhibitor family. Interacts with CDK6.

The protein localises to the nucleus. It is found in the cytoplasm. In terms of biological role, interacts strongly with CDK4 and CDK6 and inhibits them. The protein is Cyclin-dependent kinase 4 inhibitor D (Cdkn2d) of Mus musculus (Mouse).